Consider the following 536-residue polypeptide: Heparanase (536 aa).

An N-terminal signal peptide occupies residues 1–28 (MLRPLLLLWLWGRLGALTQGTPAGTAPT). Heparan sulfate group-binding positions include 55–57 (DAS) and Thr-90. Residues 103–150 (PTSEERSYWQSQDNNDICGSERVSADVLRKLQMEWPFQELLLLREQYQ) constitute a propeptide, linker peptide. Residues Cys-120 and Cys-172 are joined by a disulfide bond. 151–155 (REFKN) lines the heparan sulfate group pocket. Residues Asn-155, Asn-193, and Asn-210 are each glycosylated (N-linked (GlcNAc...) asparagine). Glu-218 functions as the Proton donor in the catalytic mechanism. Residues 263 to 273 (QPRGKTVKLLR), His-289, and Arg-296 each bind heparan sulfate group. Residues 281-410 (EVIDSLTWHH…LLFKKLVGPK (130 aa)) are required for heterodimerization with the heparanase 8 kDa subunit. Glu-336 functions as the Nucleophile in the catalytic mechanism. Heparan sulfate group is bound by residues 341–343 (YGG) and 382–384 (GNY). Cys-430 and Cys-535 are joined by a disulfide. A glycan (N-linked (GlcNAc...) asparagine) is linked at Asn-452. The segment at 520–536 (FSYGFFVIRNAKIAACI) is required for transferring proheparanase to the Golgi apparatus, secretion and subsequent enzyme activity and for enhancement of PKB/AKT1 phosphorylation.

It belongs to the glycosyl hydrolase 79 family. As to quaternary structure, heterodimer; heterodimer formation between the 8 kDa and the 50 kDa subunits is required for enzyme activity. Interacts with TF; the interaction, inhibited by heparin, enhances the generation of activated factor X and activates coagulation. Interacts with HRG; the interaction is enhanced at acidic pH, partially inhibits binding of HPSE to cell surface receptors and modulates its enzymatic activity. Interacts with SDC1; the interaction enhances the shedding of SDC1. Interacts with HPSE2. In terms of processing, proteolytically processed. The cleavage of the 65 kDa form leads to the generation of a linker peptide, and the 8 kDa and 50 kDa products. The active form, the 8/50 kDa heterodimer, is resistant to degradation. Complete removal of the linker peptide appears to be a prerequisite to the complete activation of the enzyme. Post-translationally, N-glycosylated. Glycosylation of the 50 kDa subunit appears to be essential for its solubility.

The protein localises to the lysosome membrane. The protein resides in the secreted. It localises to the nucleus. The catalysed reaction is endohydrolysis of (1-&gt;4)-beta-D-glycosidic bonds of heparan sulfate chains in heparan sulfate proteoglycan.. Inhibited by laminarin sulfate and, to a lower extent, by heparin and sulfamin. Activated by calcium and magnesium. Inhibited by EDTA. In terms of biological role, endoglycosidase that cleaves heparan sulfate proteoglycans (HSPGs) into heparan sulfate side chains and core proteoglycans. Participates in extracellular matrix (ECM) degradation and remodeling. Selectively cleaves the linkage between a glucuronic acid unit and an N-sulfo glucosamine unit carrying either a 3-O-sulfo or a 6-O-sulfo group. Can also cleave the linkage between a glucuronic acid unit and an N-sulfo glucosamine unit carrying a 2-O-sulfo group, but not linkages between a glucuronic acid unit and a 2-O-sulfated iduronic acid moiety. It is essentially inactive at neutral pH but becomes active under acidic conditions such as during tumor invasion and in inflammatory processes. Facilitates cell migration associated with metastasis, wound healing and inflammation. Enhances shedding of syndecans, and increases endothelial invasion and angiogenesis in myelomas. Acts as a procoagulant by increasing the generation of activation factor X in the presence of tissue factor and activation factor VII. Increases cell adhesion to the extracellular matrix (ECM), independent of its enzymatic activity. Induces AKT1/PKB phosphorylation via lipid rafts increasing cell mobility and invasion. Heparin increases this AKT1/PKB activation. Regulates osteogenesis. Enhances angiogenesis through up-regulation of SRC-mediated activation of VEGF. Implicated in hair follicle inner root sheath differentiation and hair homeostasis. The chain is Heparanase (Hpse) from Rattus norvegicus (Rat).